The following is a 457-amino-acid chain: MRKGIQPALEQYLVTAGGGEGAAVVAAAAAASMDKRALLASPGFAAAAAPGTYIQILTTNPSTTSCATSLQSGALTAGPLLPSVPGTEPAASSLYTTPQGPSSRVGLLQQPPAPGRGGGGGPPAKRRLELGESGHQYLSDGLKTPKGKGRAALRSPDSPKTPKSPSEKTRYDTSLGLLTKKFIQLLSQSPDGVLDLNKAAEVLKVQKRRIYDITNVLEGIHLIKKKSKNNVQWMGCSLSEDGGMLAQCQGLSKEVTELSQEEKKLDELIQSCTLDLKLLTEDSENQRLAYVTYQDIRKISGLKDQTVIVVKAPPETRLEVPDSIESLQIHLASTQGPIEVYLCPEETETHRPMKTNNQDHNGNIPKPTSKDLASNNSGHSDCSVSTANLSPLASPANLLQQTEDQIPSNLEGPFVNLLPPLLQEDYLLSLGEEEGISDLFDAYDLEKLPLVEDFMCS.

A disordered region spans residues 80–171 (LLPSVPGTEP…PKSPSEKTRY (92 aa)). The span at 93-102 (SLYTTPQGPS) shows a compositional bias: polar residues. The cyclin A/CDK2 binding stretch occupies residues 96-145 (TTPQGPSSRVGLLQQPPAPGRGGGGGPPAKRRLELGESGHQYLSDGLKTP). Residues 147–237 (GKGRAALRSP…KNNVQWMGCS (91 aa)) mediate DNA binding. Residues 155–164 (SPDSPKTPKS) are compositionally biased toward low complexity. The segment at 196-217 (LNKAAEVLKVQKRRIYDITNVL) is leucine-zipper. Residues 201–237 (EVLKVQKRRIYDITNVLEGIHLIKKKSKNNVQWMGCS) carry the DEF box motif. A dimerization region spans residues 238 to 329 (LSEDGGMLAQ…VPDSIESLQI (92 aa)). The tract at residues 350-387 (HRPMKTNNQDHNGNIPKPTSKDLASNNSGHSDCSVSTA) is disordered. The segment covering 371 to 387 (DLASNNSGHSDCSVSTA) has biased composition (polar residues). Residues 383 to 457 (SVSTANLSPL…LPLVEDFMCS (75 aa)) form a transactivation region. Positions 424-441 (EDYLLSLGEEEGISDLFD) are retinoblastoma protein binding.

This sequence belongs to the E2F/DP family. Component of the DRTF1/E2F transcription factor complex. Binds cooperatively with TFDP1/Dp-1 to E2F sites. Interacts with retinoblastoma protein RB1 and related proteins (such as RBL1) that inhibit the E2F transactivation domain. Binds EAPP.

Its subcellular location is the nucleus. Its function is as follows. Transcription activator that binds DNA cooperatively with DP proteins through the E2 recognition site, 5'-TTTC[CG]CGC-3' found in the promoter region of a number of genes whose products are involved in cell cycle regulation or in DNA replication. The DRTF1/E2F complex functions in the control of cell-cycle progression from G1 to S phase. E2F3 binds specifically to RB1 in a cell-cycle dependent manner. Inhibits adipogenesis, probably through the repression of CEBPA binding to its target gene promoters. The chain is Transcription factor E2F3 (E2f3) from Mus musculus (Mouse).